The chain runs to 335 residues: Hsp90 co-chaperone Cdc37-like 1 (335 aa).

The span at 1 to 11 (MEQPWPPPGPW) shows a compositional bias: pro residues. Residues 1 to 42 (MEQPWPPPGPWSFPRTGGETEEESDLDVSPSSSHYSPVPDGG) form a disordered region. The self-association stretch occupies residues 2–170 (EQPWPPPGPW…YEQKIRHFGM (169 aa)). Positions 27 to 40 (DVSPSSSHYSPVPD) are enriched in low complexity. Phosphoserine is present on residues S32 and S88. The stretch at 84-120 (HNSESLDQEHAKAQTAVSELRQREEEWRQKEEALVQR) forms a coiled coil. Residues 147 to 276 (KTEDEDKSQS…ARVRLYAQSQ (130 aa)) form a self-association and interaction with Hsp90 region. Residues 266–335 (KARVRLYAQS…EDDDRMMDTV (70 aa)) form an interaction with Hsp70 region. The segment at 277 to 335 (SFAPVTVENHAPHSGVGCIGSAEPLPQNPDSLQCCPPAPLCSVDSVVHKEDDDRMMDTV) is required for interaction with STIP1.

The protein belongs to the CDC37 family. As to quaternary structure, self-associates. Forms complexes with Hsp70 and Hsp90. Interacts with CDC37, FKBP4, PPID and STIP1.

Its subcellular location is the cytoplasm. Its function is as follows. Co-chaperone that binds to numerous proteins and promotes their interaction with Hsp70 and Hsp90. The protein is Hsp90 co-chaperone Cdc37-like 1 (Cdc37l1) of Rattus norvegicus (Rat).